A 235-amino-acid polypeptide reads, in one-letter code: (5-formylfuran-3-yl)methyl phosphate synthase (235 aa).

Lys27 serves as the catalytic Schiff-base intermediate with substrate. The Proton acceptor role is filled by Lys86.

This sequence belongs to the MfnB family.

The catalysed reaction is 2 D-glyceraldehyde 3-phosphate = 4-(hydroxymethyl)-2-furancarboxaldehyde phosphate + phosphate + 2 H2O. Its pathway is cofactor biosynthesis; methanofuran biosynthesis. Its function is as follows. Catalyzes the formation of 4-(hydroxymethyl)-2-furancarboxaldehyde phosphate (4-HFC-P) from two molecules of glyceraldehyde-3-P (GA-3-P). The polypeptide is (5-formylfuran-3-yl)methyl phosphate synthase (Archaeoglobus fulgidus (strain ATCC 49558 / DSM 4304 / JCM 9628 / NBRC 100126 / VC-16)).